Here is a 131-residue protein sequence, read N- to C-terminus: Arsenate reductase 2 (131 aa).

Active-site nucleophile residues include Cys-10, Cys-82, and Cys-89. 2 cysteine pairs are disulfide-bonded: Cys-10–Cys-82 and Cys-82–Cys-89.

Belongs to the low molecular weight phosphotyrosine protein phosphatase family. Thioredoxin-coupled ArsC subfamily.

It is found in the cytoplasm. The enzyme catalyses arsenate + [thioredoxin]-dithiol + H(+) = arsenite + [thioredoxin]-disulfide + H2O. Catalyzes the reduction of arsenate [As(V)] to arsenite [As(III)]. The sequence is that of Arsenate reductase 2 from Staphylococcus haemolyticus (strain JCSC1435).